Reading from the N-terminus, the 389-residue chain is Glutamate 5-kinase (389 aa).

Lys-16 is an ATP binding site. The substrate site is built by Ser-56, Asp-143, and Asn-155. Position 175 to 176 (175 to 176 (SD)) interacts with ATP. Residues 281–358 (AGELHVDDGA…AEIETILGYP (78 aa)) enclose the PUA domain.

Belongs to the glutamate 5-kinase family.

The protein localises to the cytoplasm. It carries out the reaction L-glutamate + ATP = L-glutamyl 5-phosphate + ADP. The protein operates within amino-acid biosynthesis; L-proline biosynthesis; L-glutamate 5-semialdehyde from L-glutamate: step 1/2. Its function is as follows. Catalyzes the transfer of a phosphate group to glutamate to form L-glutamate 5-phosphate. This chain is Glutamate 5-kinase, found in Rhizobium johnstonii (strain DSM 114642 / LMG 32736 / 3841) (Rhizobium leguminosarum bv. viciae).